The chain runs to 208 residues: ATP-dependent Clp protease proteolytic subunit (208 aa).

Ser105 (nucleophile) is an active-site residue. His130 is a catalytic residue.

Belongs to the peptidase S14 family. In terms of assembly, fourteen ClpP subunits assemble into 2 heptameric rings which stack back to back to give a disk-like structure with a central cavity, resembling the structure of eukaryotic proteasomes.

It localises to the cytoplasm. It carries out the reaction Hydrolysis of proteins to small peptides in the presence of ATP and magnesium. alpha-casein is the usual test substrate. In the absence of ATP, only oligopeptides shorter than five residues are hydrolyzed (such as succinyl-Leu-Tyr-|-NHMec, and Leu-Tyr-Leu-|-Tyr-Trp, in which cleavage of the -Tyr-|-Leu- and -Tyr-|-Trp bonds also occurs).. Cleaves peptides in various proteins in a process that requires ATP hydrolysis. Has a chymotrypsin-like activity. Plays a major role in the degradation of misfolded proteins. The sequence is that of ATP-dependent Clp protease proteolytic subunit from Xanthomonas campestris pv. campestris (strain 8004).